The sequence spans 161 residues: Regulator of ribonuclease activity A (161 aa).

This sequence belongs to the RraA family. Homotrimer. Binds to both RNA-binding sites in the C-terminal region of Rne and to RhlB.

It is found in the cytoplasm. Globally modulates RNA abundance by binding to RNase E (Rne) and regulating its endonucleolytic activity. Can modulate Rne action in a substrate-dependent manner by altering the composition of the degradosome. Modulates RNA-binding and helicase activities of the degradosome. This is Regulator of ribonuclease activity A from Pectobacterium atrosepticum (strain SCRI 1043 / ATCC BAA-672) (Erwinia carotovora subsp. atroseptica).